A 397-amino-acid polypeptide reads, in one-letter code: 1-deoxy-D-xylulose 5-phosphate reductoisomerase (397 aa).

The NADPH site is built by Thr-12, Gly-13, Ser-14, Ile-15, Gly-38, Lys-39, Asn-40, and Asn-126. Lys-127 is a binding site for 1-deoxy-D-xylulose 5-phosphate. Position 128 (Glu-128) interacts with NADPH. Residue Asp-152 participates in Mn(2+) binding. 1-deoxy-D-xylulose 5-phosphate is bound by residues Ser-153, Glu-154, Ser-188, and His-211. Glu-154 serves as a coordination point for Mn(2+). Gly-217 is a binding site for NADPH. Ser-224, Asn-229, Lys-230, and Glu-233 together coordinate 1-deoxy-D-xylulose 5-phosphate. Glu-233 contributes to the Mn(2+) binding site.

This sequence belongs to the DXR family. Requires Mg(2+) as cofactor. The cofactor is Mn(2+).

It carries out the reaction 2-C-methyl-D-erythritol 4-phosphate + NADP(+) = 1-deoxy-D-xylulose 5-phosphate + NADPH + H(+). It functions in the pathway isoprenoid biosynthesis; isopentenyl diphosphate biosynthesis via DXP pathway; isopentenyl diphosphate from 1-deoxy-D-xylulose 5-phosphate: step 1/6. In terms of biological role, catalyzes the NADPH-dependent rearrangement and reduction of 1-deoxy-D-xylulose-5-phosphate (DXP) to 2-C-methyl-D-erythritol 4-phosphate (MEP). The polypeptide is 1-deoxy-D-xylulose 5-phosphate reductoisomerase (Haemophilus influenzae (strain PittGG)).